We begin with the raw amino-acid sequence, 371 residues long: MKIRFVFILSVLISGVCCISKNVSRRVANRMTAHSRFLFVHDKYKRNKNFKLKNNKEENNFINLYTVKNPLKCKIVDKINLVRPNSPNEVYHLEINHNGLFKYLEGHTCGIIPYYNELDNNPNNQINKDHNIINTTNHTNHNNIALSHIKKQRCARLYSISSSNNMENLSVAIKIHKYEQTENAPNITNYGYCSGFIKNLKINDDIYLTGAHGYFNLPNDAIQKNTNFIFIATGTGISPYISFLKKLFAYDKNNLYNRNSNYTGYITIYYGVYNEDSILYLNELEYFQKMYPNNINIHYVFSYKQNSDATSFYVQDEIYKRKTEFLNLFNNYKCELYICGHKSIRYKVMDILKSHDQFDEKKKKRVHVEVY.

The transit peptide at 1-18 (MKIRFVFILSVLISGVCC) directs the protein to the apicoplast. Residues lysine 68, 155–159 (ARLYS), 172–179 (AIKIHKYE), 192–194 (YCS), and threonine 235 contribute to the FAD site. The FAD-binding FR-type domain occupies 68-218 (KNPLKCKIVD…TGAHGYFNLP (151 aa)). Lysine 174 lines the NADP(+) pocket. Residues 272–273 (VY), serine 302, 313–315 (YVQ), and 341–343 (HKS) each bind NADP(+). FAD-binding residues include lysine 342 and tyrosine 371.

It belongs to the ferredoxin--NADP reductase type 1 family. As to quaternary structure, monomer. Homodimer; disulfide linked. NADP binding accelerates formation of an inactive, disulfide-linked homodimer when the protein is exposed to air for 24 hours or more (in vitro); the physiological relevance of this is uncertain. FAD serves as cofactor.

The protein localises to the plastid. It is found in the apicoplast. It catalyses the reaction 2 reduced [2Fe-2S]-[ferredoxin] + NADP(+) + H(+) = 2 oxidized [2Fe-2S]-[ferredoxin] + NADPH. May play a role in the terminal step of the DOXP/MEP pathway for isoprenoid precursor biosynthesis. The sequence is that of Ferredoxin--NADP reductase, apicoplast from Plasmodium falciparum (isolate 3D7).